The following is a 330-amino-acid chain: DNA-directed RNA polymerase subunit alpha (330 aa).

Positions 1 to 236 (MQNSVIEFLK…EQLEAFIDLR (236 aa)) are alpha N-terminal domain (alpha-NTD). The interval 250 to 330 (FDPILLRLVD…NWPPTNILDN (81 aa)) is alpha C-terminal domain (alpha-CTD).

This sequence belongs to the RNA polymerase alpha chain family. As to quaternary structure, homodimer. The RNAP catalytic core consists of 2 alpha, 1 beta, 1 beta' and 1 omega subunit. When a sigma factor is associated with the core the holoenzyme is formed, which can initiate transcription.

The catalysed reaction is RNA(n) + a ribonucleoside 5'-triphosphate = RNA(n+1) + diphosphate. Functionally, DNA-dependent RNA polymerase catalyzes the transcription of DNA into RNA using the four ribonucleoside triphosphates as substrates. In Blochmanniella pennsylvanica (strain BPEN), this protein is DNA-directed RNA polymerase subunit alpha.